A 115-amino-acid polypeptide reads, in one-letter code: Phosphoribosyl-AMP cyclohydrolase (115 aa).

Asp-80 lines the Mg(2+) pocket. Cys-81 is a binding site for Zn(2+). Mg(2+)-binding residues include Asp-82 and Asp-84. Residues Cys-97 and Cys-104 each contribute to the Zn(2+) site.

The protein belongs to the PRA-CH family. As to quaternary structure, homodimer. The cofactor is Mg(2+). Zn(2+) is required as a cofactor.

The protein localises to the cytoplasm. It carries out the reaction 1-(5-phospho-beta-D-ribosyl)-5'-AMP + H2O = 1-(5-phospho-beta-D-ribosyl)-5-[(5-phospho-beta-D-ribosylamino)methylideneamino]imidazole-4-carboxamide. It participates in amino-acid biosynthesis; L-histidine biosynthesis; L-histidine from 5-phospho-alpha-D-ribose 1-diphosphate: step 3/9. In terms of biological role, catalyzes the hydrolysis of the adenine ring of phosphoribosyl-AMP. This chain is Phosphoribosyl-AMP cyclohydrolase, found in Mycobacterium leprae (strain Br4923).